Here is a 975-residue protein sequence, read N- to C-terminus: Probable outer membrane protein PmpA (975 aa).

A signal peptide spans 1-51 (MNRVIEIHAHYDQRQLSQSPNTNFLVHHPYLTLIPKFLLGALIVYAPYSFA). Residues 699–975 (RSLIPTSYFG…SLSCGGYVGF (277 aa)) form the Autotransporter domain.

It belongs to the PMP outer membrane protein family.

It localises to the secreted. It is found in the cell wall. Its subcellular location is the cell outer membrane. This chain is Probable outer membrane protein PmpA (pmpA), found in Chlamydia trachomatis serovar D (strain ATCC VR-885 / DSM 19411 / UW-3/Cx).